The chain runs to 119 residues: Ribonuclease P protein component (119 aa).

The protein belongs to the RnpA family. Consists of a catalytic RNA component (M1 or rnpB) and a protein subunit.

The enzyme catalyses Endonucleolytic cleavage of RNA, removing 5'-extranucleotides from tRNA precursor.. Functionally, RNaseP catalyzes the removal of the 5'-leader sequence from pre-tRNA to produce the mature 5'-terminus. It can also cleave other RNA substrates such as 4.5S RNA. The protein component plays an auxiliary but essential role in vivo by binding to the 5'-leader sequence and broadening the substrate specificity of the ribozyme. This Listeria monocytogenes serotype 4a (strain HCC23) protein is Ribonuclease P protein component.